The following is a 267-amino-acid chain: L-aspartate dehydrogenase (267 aa).

Residues A124 and N190 each contribute to the NAD(+) site. H220 is a catalytic residue.

It belongs to the L-aspartate dehydrogenase family.

The enzyme catalyses L-aspartate + NADP(+) + H2O = oxaloacetate + NH4(+) + NADPH + H(+). The catalysed reaction is L-aspartate + NAD(+) + H2O = oxaloacetate + NH4(+) + NADH + H(+). Its pathway is cofactor biosynthesis; NAD(+) biosynthesis; iminoaspartate from L-aspartate (dehydrogenase route): step 1/1. Specifically catalyzes the NAD or NADP-dependent dehydrogenation of L-aspartate to iminoaspartate. This chain is L-aspartate dehydrogenase, found in Pseudomonas aeruginosa (strain ATCC 15692 / DSM 22644 / CIP 104116 / JCM 14847 / LMG 12228 / 1C / PRS 101 / PAO1).